A 140-amino-acid chain; its full sequence is Ribosomal RNA large subunit methyltransferase H (140 aa).

The S-adenosyl-L-methionine site is built by leucine 55 and glycine 87.

It belongs to the RNA methyltransferase RlmH family. As to quaternary structure, homodimer.

The protein localises to the cytoplasm. The catalysed reaction is pseudouridine(1915) in 23S rRNA + S-adenosyl-L-methionine = N(3)-methylpseudouridine(1915) in 23S rRNA + S-adenosyl-L-homocysteine + H(+). Functionally, specifically methylates the pseudouridine at position 1915 (m3Psi1915) in 23S rRNA. This is Ribosomal RNA large subunit methyltransferase H from Erythrobacter litoralis (strain HTCC2594).